Here is a 288-residue protein sequence, read N- to C-terminus: Energy-coupling factor transporter ATP-binding protein EcfA2 (288 aa).

One can recognise an ABC transporter domain in the interval 2–244; sequence IKFEKVNYTY…VDFLKAHELG (243 aa). 39-46 is a binding site for ATP; sequence GHTGSGKS. Glu-170 (proton acceptor) is an active-site residue.

It belongs to the ABC transporter superfamily. Energy-coupling factor EcfA family. As to quaternary structure, forms a stable energy-coupling factor (ECF) transporter complex composed of 2 membrane-embedded substrate-binding proteins (S component), 2 ATP-binding proteins (A component) and 2 transmembrane proteins (T component). In L.lactis forms a stable complex with EcfA' and EcfT and substrate-binding components. In E.coli forms a stable complex with EcfA, EcfT and individually with 3 tested substrate-binding components (BioY, NiaX and ThiT) with a stoichiometry of 1.1:1:1. The core ECF complex interacts with a number of substrate-specific binding components, including BioY, BioY2, HmpT, NiaX, PanT, QueT, RibU and ThiT.

It is found in the cell membrane. Functionally, ATP-binding (A) component of a common energy-coupling factor (ECF) ABC-transporter complex. Unlike classic ABC transporters this ECF transporter provides the energy necessary to transport a number of different substrates. In this organism these probably include biotin, thiamine precursor, niacin, pantothenic acid, queuosine precursor, riboflavin and thiamine. Uptake of niacin or riboflavin into proteosomes containing EcfA1A2T and Niax or RibU has been demonstrated. Uptake requires hydrolyzable Mg-ATP and is substrate-specific; NiaX-containing proteosomes did not transport riboflavin. This Lactococcus lactis subsp. cremoris (strain MG1363) protein is Energy-coupling factor transporter ATP-binding protein EcfA2.